A 1241-amino-acid polypeptide reads, in one-letter code: Interphotoreceptor matrix proteoglycan 2 (1241 aa).

The first 22 residues, 1-22 (MIMFPLFGKISLGILIFVLIEG), serve as a signal peptide directing secretion. Topologically, residues 23–1099 (DFPSLTAQTY…KHCEEFVSEP (1077 aa)) are extracellular. An N-linked (GlcNAc...) asparagine glycan is attached at N154. The disordered stretch occupies residues 180-223 (ELSSPVPVGDTSTLGDTTLSVPHPEVDAYEGASESSLERPEESI). Over residues 189 to 199 (DTSTLGDTTLS) the composition is skewed to polar residues. 2 O-linked (GalNAc...) threonine glycosylation sites follow: T190 and T192. Residues 239-353 (GEQIAEFSIH…KPTVVYTISN (115 aa)) enclose the SEA 1 domain. Residues 259-267 (QDSSSFHHQ) form a hyaluronan-binding motif involved in chondroitin sulfate A-binding region. 3 N-linked (GlcNAc...) asparagine glycosylation sites follow: N301, N320, and N370. T544 and T556 each carry an O-linked (GalNAc...) threonine glycan. Residues 660-678 (QISKHSKYEHDDRSTHFPE) are compositionally biased toward basic and acidic residues. A disordered region spans residues 660–684 (QISKHSKYEHDDRSTHFPEEEPLSG). An SEA 2 domain is found at 897 to 1010 (GALVVFFSLR…YSLDVESGDE (114 aa)). N-linked (GlcNAc...) asparagine glycans are attached at residues N942 and N956. 2 consecutive EGF-like domains span residues 1010-1051 (EANP…RPCQ) and 1052-1093 (SLCD…KHCE). 6 disulfide bridges follow: C1014–C1025, C1019–C1036, C1038–C1050, C1054–C1067, C1061–C1077, and C1079–C1092. The interval 1080 to 1088 (RVGENWWYR) is hyaluronan-binding motif involved in chondroitin sulfate C-binding. A helical transmembrane segment spans residues 1100–1120 (VIIGITIASVVGLLVIFSAII). At 1121 to 1241 (YFFIRTLQAH…FVREQQVEEV (121 aa)) the chain is on the cytoplasmic side. A hyaluronan-binding motif involved in chondroitin sulfate A- and C-binding region spans residues 1125-1133 (RTLQAHHDR). A hyaluronan-binding motif involved in chondroitin sulfate C-binding region spans residues 1136-1145 (RESPFSGSSR). The segment at 1210–1218 (REEIQERMR) is hyaluronan-binding motif involved in chondroitin sulfate A- and C-binding motif.

Highly glycosylated (N- and O-linked carbohydrates). Expressed in the retina (at protein level). Expressed by photoreceptors of the interphotoreceptor matrix (IPM) surrounding both rods and cones (at protein level). IPM occupies the subretinal space between the apices of the retinal pigment epithelium and the neural retina. Expressed in the pineal gland (at protein level).

The protein localises to the photoreceptor outer segment membrane. Its subcellular location is the photoreceptor inner segment membrane. It localises to the secreted. The protein resides in the extracellular space. It is found in the extracellular matrix. The protein localises to the interphotoreceptor matrix. Functionally, chondroitin sulfate- and hyaluronan-binding proteoglycan involved in the organization of interphotoreceptor matrix; may participate in the maturation and maintenance of the light-sensitive photoreceptor outer segment. Binds heparin. This is Interphotoreceptor matrix proteoglycan 2 (IMPG2) from Homo sapiens (Human).